Reading from the N-terminus, the 632-residue chain is POU domain, class 2, transcription factor 1 (632 aa).

Phosphothreonine occurs at positions 157 and 163. The region spanning 167 to 241 is the POU-specific domain; the sequence is EEPSDLEELE…LLEKWLNDAE (75 aa). A Phosphoserine modification is found at S170. A compositionally biased stretch (low complexity) spans 243-258; that stretch reads LSSDSTASSPSALNSP. Residues 243 to 273 form a disordered region; the sequence is LSSDSTASSPSALNSPGLGAEGLNRRRKKRT. Positions 268 to 327 form a DNA-binding region, homeobox; the sequence is RRKKRTSIETNIRVALEKSFMENQKPTSEDITLIAEQLNMEKEVIRVWFCNRRQKEKRIN. A phosphoserine mark is found at S274 and S337. The segment at 385 to 448 is disordered; sequence GTTDSTSNNT…STPLPSPLGA (64 aa). Positions 394-441 are enriched in low complexity; the sequence is TATVISTAPPASSAVTSPSLSPSPSASASTSEASSASETSTTQTTSTP.

This sequence belongs to the POU transcription factor family. Class-2 subfamily. Interacts with POU2AF1; the interaction increases POU2F1 transactivation activity. Interacts with NR3C1, AR, PGR and HCFC1. In terms of processing, phosphorylated by PRKDC. Widely expressed.

It is found in the nucleus. In terms of biological role, transcription factor that binds to the octamer motif (5'-ATTTGCAT-3') and activates the promoters of the genes for some small nuclear RNAs (snRNA) and of genes such as those for histone H2B and immunoglobulins. Modulates transcription transactivation by NR3C1, AR and PGR. The sequence is that of POU domain, class 2, transcription factor 1 (Pou2f1) from Rattus norvegicus (Rat).